A 776-amino-acid polypeptide reads, in one-letter code: A-type ATP synthase subunit A (776 aa).

It belongs to the ATPase alpha/beta chains family. Has multiple subunits with at least A(3), B(3), C, D, E, F, H, I and proteolipid K(x). In terms of processing, this protein undergoes a protein self splicing that involves a post-translational excision of the VDE intervening region (intein) followed by peptide ligation.

The protein localises to the cell membrane. The enzyme catalyses ATP + H2O + 4 H(+)(in) = ADP + phosphate + 5 H(+)(out). In terms of biological role, component of the A-type ATP synthase that produces ATP from ADP in the presence of a proton gradient across the membrane. The A chain is the catalytic subunit. This chain is A-type ATP synthase subunit A, found in Thermoplasma volcanium (strain ATCC 51530 / DSM 4299 / JCM 9571 / NBRC 15438 / GSS1).